The chain runs to 20 residues: Phenol-soluble modulin alpha 4 peptide (20 aa).

Belongs to the phenol-soluble modulin alpha peptides family.

Functionally, peptide which can recruit, activate and subsequently lyse neutrophils, thus eliminating the main cellular defense against infection. The chain is Phenol-soluble modulin alpha 4 peptide (psmA4) from Staphylococcus aureus (strain bovine RF122 / ET3-1).